Reading from the N-terminus, the 375-residue chain is tRNA (guanine(26)-N(2))-dimethyltransferase (375 aa).

The region spanning 2–368 (KYITEGNTKL…AKLIDIVEFI (367 aa)) is the Trm1 methyltransferase domain. S-adenosyl-L-methionine is bound by residues Arg-35, Arg-66, Asp-89, Asp-116, and Ala-117.

This sequence belongs to the class I-like SAM-binding methyltransferase superfamily. Trm1 family.

It carries out the reaction guanosine(26) in tRNA + 2 S-adenosyl-L-methionine = N(2)-dimethylguanosine(26) in tRNA + 2 S-adenosyl-L-homocysteine + 2 H(+). In terms of biological role, dimethylates a single guanine residue at position 26 of a number of tRNAs using S-adenosyl-L-methionine as donor of the methyl groups. The protein is tRNA (guanine(26)-N(2))-dimethyltransferase of Methanococcus aeolicus (strain ATCC BAA-1280 / DSM 17508 / OCM 812 / Nankai-3).